The primary structure comprises 310 residues: MPTEDYDSKPSWADQVEEEGIDPEPISPPVTKVQQDPASFVLDTPQEVINGKIKTITEYKLNDEGKKIKIVRTFKIETLKASKVVAHRKNWKKFGNSEYDPPGPNVATTTVSDDVLMTFITSKEDLNNQEEEDPMNKLKGQKIVSCRICKGDHWTTRCPYKDTLGPMQKELAEQLGLSTGDKEKAPGAEPEPAQAPVSKTGKYVPPSLRDGGSRRGESMQPNRRADDNATIRVTNLSEDTRETDLQELFRPFGSISRIYLAKDKTTGQSKGFAFISFHRREDAARAIAGVSGFGYDHLILNVEWAKPSTN.

2 disordered regions span residues 1–32 (MPTEDYDSKPSWADQVEEEGIDPEPISPPVTK) and 179–229 (TGDK…DDNA). A compositionally biased stretch (low complexity) spans 187–196 (GAEPEPAQAP). Positions 211–229 (GGSRRGESMQPNRRADDNA) are enriched in basic and acidic residues. The region spanning 229 to 307 (ATIRVTNLSE…LILNVEWAKP (79 aa)) is the RRM domain.

Belongs to the eIF-3 subunit G family. Component of the eukaryotic translation initiation factor 3 (eIF-3) complex, which is composed of 13 subunits: eif3a, eif3b, eif3c, eif3d, eif3e, eif3f, eif3g, eif3h, eif3i, eif3j, eif3k, eif3l and eif3m.

Its subcellular location is the cytoplasm. Functionally, RNA-binding component of the eukaryotic translation initiation factor 3 (eIF-3) complex, which is involved in protein synthesis of a specialized repertoire of mRNAs and, together with other initiation factors, stimulates binding of mRNA and methionyl-tRNAi to the 40S ribosome. The eIF-3 complex specifically targets and initiates translation of a subset of mRNAs involved in cell proliferation. This subunit can bind 18S rRNA. The sequence is that of Eukaryotic translation initiation factor 3 subunit G (eif3g) from Xenopus tropicalis (Western clawed frog).